The primary structure comprises 449 residues: Heterogeneous nuclear ribonucleoprotein H (449 aa).

Methionine 1 is modified (N-acetylmethionine; in Heterogeneous nuclear ribonucleoprotein H; alternate). Methionine 2 carries the post-translational modification N-acetylmethionine; in Heterogeneous nuclear ribonucleoprotein H, N-terminally processed. In terms of domain architecture, RRM 1 spans 11-90 (FVVKVRGLPW…RYVEVFKSNN (80 aa)). The residue at position 23 (serine 23) is a Phosphoserine. A Glycyl lysine isopeptide (Lys-Gly) (interchain with G-Cter in SUMO2) cross-link involves residue lysine 35. Phosphoserine is present on residues serine 54 and serine 63. Glycyl lysine isopeptide (Lys-Gly) (interchain with G-Cter in SUMO2) cross-links involve residues lysine 87 and lysine 98. The RRM 2 domain maps to 111 to 188 (GFVRLRGLPF…RYIEIFKSSR (78 aa)). Residue arginine 233 is modified to Dimethylated arginine; alternate. At arginine 233 the chain carries Omega-N-methylarginine; alternate. The 1-1 repeat unit spans residues 234 to 249 (GAYGGGYGGYDDYNGY). A 2 X 16 AA Gly-rich approximate repeats region spans residues 234–433 (GAYGGGYGGY…YGGQSSMSGY (200 aa)). Position 246 is a phosphotyrosine (tyrosine 246). The 76-residue stretch at 289 to 364 (HCVHMRGLPY…RYVELFLNST (76 aa)) folds into the RRM 3 domain. Serine 310 is modified (phosphoserine). 3 consecutive repeat copies span residues 354 to 372 (HRYV…GGAY), 374 to 392 (HRYV…GGAY), and 418 to 433 (GGYG…MSGY). The segment at 354 to 392 (HRYVELFLNSTAGASGGAYEHRYVELFLNSTAGASGGAY) is 2 X 19 AA perfect repeats.

Part of a ternary complex containing FUBP2, PTBP1, PTBP2 and HNRNPH1. Identified in the spliceosome C complex. Interacts with IGF2BP1. Interacts with CUGBP1; the interaction is RNA-dependent. Interacts with MBNL1; the interaction in RNA-independent. As to expression, expressed ubiquitously.

It localises to the nucleus. The protein resides in the nucleoplasm. In terms of biological role, this protein is a component of the heterogeneous nuclear ribonucleoprotein (hnRNP) complexes which provide the substrate for the processing events that pre-mRNAs undergo before becoming functional, translatable mRNAs in the cytoplasm. Mediates pre-mRNA alternative splicing regulation. Inhibits, together with CUGBP1, insulin receptor (IR) pre-mRNA exon 11 inclusion in myoblast. Binds to the IR RNA. Binds poly(RG). The sequence is that of Heterogeneous nuclear ribonucleoprotein H (HNRNPH1) from Homo sapiens (Human).